The primary structure comprises 840 residues: Protein translocase subunit SecA (840 aa).

ATP is bound by residues glutamine 85, 103–107 (GEGKT), and aspartate 492. The disordered stretch occupies residues 787 to 821 (QRERVAKETGASHGGDSQEIKKKPVKKEPKVGRND). Over residues 802 to 819 (DSQEIKKKPVKKEPKVGR) the composition is skewed to basic and acidic residues. 4 residues coordinate Zn(2+): cysteine 823, cysteine 825, cysteine 834, and cysteine 835.

This sequence belongs to the SecA family. Monomer and homodimer. Part of the essential Sec protein translocation apparatus which comprises SecA, SecYEG and auxiliary proteins SecDF. Other proteins may also be involved. Zn(2+) serves as cofactor.

The protein resides in the cell membrane. Its subcellular location is the cytoplasm. The catalysed reaction is ATP + H2O + cellular proteinSide 1 = ADP + phosphate + cellular proteinSide 2.. In terms of biological role, part of the Sec protein translocase complex. Interacts with the SecYEG preprotein conducting channel. Has a central role in coupling the hydrolysis of ATP to the transfer of proteins into and across the cell membrane, serving as an ATP-driven molecular motor driving the stepwise translocation of polypeptide chains across the membrane. The chain is Protein translocase subunit SecA from Clostridium perfringens (strain SM101 / Type A).